We begin with the raw amino-acid sequence, 122 residues long: Ubiquitin-related modifier 1 (122 aa).

Residues Pro33–Asp48 are compositionally biased toward polar residues. Residues Pro33–Pro52 form a disordered region. Gly122 bears the 1-thioglycine mark. Gly122 participates in a covalent cross-link: Glycyl lysine isopeptide (Gly-Lys) (interchain with K-? in acceptor proteins).

The protein belongs to the URM1 family. In terms of processing, C-terminal thiocarboxylation occurs in 2 steps, it is first acyl-adenylated (-COAMP) via the hesA/moeB/thiF part of UBA4, then thiocarboxylated (-COSH) via the rhodanese domain of UBA4.

The protein resides in the cytoplasm. It functions in the pathway tRNA modification; 5-methoxycarbonylmethyl-2-thiouridine-tRNA biosynthesis. Functionally, acts as a sulfur carrier required for 2-thiolation of mcm(5)S(2)U at tRNA wobble positions of cytosolic tRNA(Lys), tRNA(Glu) and tRNA(Gln). Serves as sulfur donor in tRNA 2-thiolation reaction by being thiocarboxylated (-COSH) at its C-terminus by the MOCS3 homolog UBA4. The sulfur is then transferred to tRNA to form 2-thiolation of mcm(5)S(2)U. Prior mcm(5) tRNA modification by the elongator complex is required for 2-thiolation. Also acts as a ubiquitin-like protein (UBL) that is covalently conjugated via an isopeptide bond to lysine residues of target proteins such as AHP1. The thiocarboxylated form serves as substrate for conjugation and oxidative stress specifically induces the formation of UBL-protein conjugates. The sequence is that of Ubiquitin-related modifier 1 from Laccaria bicolor (strain S238N-H82 / ATCC MYA-4686) (Bicoloured deceiver).